The chain runs to 167 residues: Ribonuclease H (167 aa).

The region spanning 1–143 is the RNase H type-1 domain; it reads MYKQIEIFTD…CDQLARKAAK (143 aa). Residues Asp-10, Glu-48, Asp-70, and Asp-135 each contribute to the Mg(2+) site.

The protein belongs to the RNase H family. In terms of assembly, monomer. Requires Mg(2+) as cofactor.

Its subcellular location is the cytoplasm. The enzyme catalyses Endonucleolytic cleavage to 5'-phosphomonoester.. Functionally, endonuclease that specifically degrades the RNA of RNA-DNA hybrids. This chain is Ribonuclease H, found in Blochmanniella floridana.